Here is a 374-residue protein sequence, read N- to C-terminus: tRNA-specific 2-thiouridylase MnmA (374 aa).

Residues 17–24 (GMSGGVDS) and Met43 each bind ATP. Positions 103–105 (NPD) are interaction with target base in tRNA. Cys108 acts as the Nucleophile in catalysis. The cysteines at positions 108 and 204 are disulfide-linked. Gly132 contacts ATP. Positions 154–156 (KDQ) are interaction with tRNA. The active-site Cysteine persulfide intermediate is Cys204. The interval 316-317 (RY) is interaction with tRNA.

It belongs to the MnmA/TRMU family.

The protein resides in the cytoplasm. It catalyses the reaction S-sulfanyl-L-cysteinyl-[protein] + uridine(34) in tRNA + AH2 + ATP = 2-thiouridine(34) in tRNA + L-cysteinyl-[protein] + A + AMP + diphosphate + H(+). In terms of biological role, catalyzes the 2-thiolation of uridine at the wobble position (U34) of tRNA, leading to the formation of s(2)U34. The sequence is that of tRNA-specific 2-thiouridylase MnmA from Pseudomonas putida (strain GB-1).